A 159-amino-acid polypeptide reads, in one-letter code: Protein NrdI (159 aa).

This sequence belongs to the NrdI family.

In terms of biological role, probably involved in ribonucleotide reductase function. The sequence is that of Protein NrdI from Rhodococcus erythropolis (strain PR4 / NBRC 100887).